Here is a 235-residue protein sequence, read N- to C-terminus: MGQKVHPHGIRLGIVKPWSSTWFANTQDFADNLEGDFKVRKFLNKELANASVSRITIERPAKSIRVTIHTARPGIVIGKKGEDVEKLRNAVSKIAGVPAQINIAEVKKPELDAKLVADSIASQLERRVMFRRAMKRAVQSAMRLGAKGIKVEVSGRLGGAEIARSEWYREGRVPLHTLRADIDYNTAEAHTTYGVIGVKVWIFKGEILGGMAAVAQSEQQPADKPKKAPRGKGRK.

Positions 39–107 (VRKFLNKELA…PAQINIAEVK (69 aa)) constitute a KH type-2 domain. The tract at residues 215–235 (AQSEQQPADKPKKAPRGKGRK) is disordered.

This sequence belongs to the universal ribosomal protein uS3 family. In terms of assembly, part of the 30S ribosomal subunit. Forms a tight complex with proteins S10 and S14.

In terms of biological role, binds the lower part of the 30S subunit head. Binds mRNA in the 70S ribosome, positioning it for translation. The sequence is that of Small ribosomal subunit protein uS3 from Haemophilus influenzae (strain PittEE).